The sequence spans 100 residues: Aspartyl/glutamyl-tRNA(Asn/Gln) amidotransferase subunit C (100 aa).

The protein belongs to the GatC family. In terms of assembly, heterotrimer of A, B and C subunits.

It catalyses the reaction L-glutamyl-tRNA(Gln) + L-glutamine + ATP + H2O = L-glutaminyl-tRNA(Gln) + L-glutamate + ADP + phosphate + H(+). The catalysed reaction is L-aspartyl-tRNA(Asn) + L-glutamine + ATP + H2O = L-asparaginyl-tRNA(Asn) + L-glutamate + ADP + phosphate + 2 H(+). Allows the formation of correctly charged Asn-tRNA(Asn) or Gln-tRNA(Gln) through the transamidation of misacylated Asp-tRNA(Asn) or Glu-tRNA(Gln) in organisms which lack either or both of asparaginyl-tRNA or glutaminyl-tRNA synthetases. The reaction takes place in the presence of glutamine and ATP through an activated phospho-Asp-tRNA(Asn) or phospho-Glu-tRNA(Gln). The polypeptide is Aspartyl/glutamyl-tRNA(Asn/Gln) amidotransferase subunit C (Streptococcus agalactiae serotype Ia (strain ATCC 27591 / A909 / CDC SS700)).